Consider the following 210-residue polypeptide: Thiamine-phosphate synthase (210 aa).

Residues 38 to 42 (QFREK) and N70 contribute to the 4-amino-2-methyl-5-(diphosphooxymethyl)pyrimidine site. D71 and D90 together coordinate Mg(2+). S107 lines the 4-amino-2-methyl-5-(diphosphooxymethyl)pyrimidine pocket. 132-134 (TKT) contacts 2-[(2R,5Z)-2-carboxy-4-methylthiazol-5(2H)-ylidene]ethyl phosphate. K135 serves as a coordination point for 4-amino-2-methyl-5-(diphosphooxymethyl)pyrimidine. 2-[(2R,5Z)-2-carboxy-4-methylthiazol-5(2H)-ylidene]ethyl phosphate is bound at residue 183-184 (IS).

The protein belongs to the thiamine-phosphate synthase family. Mg(2+) is required as a cofactor.

The enzyme catalyses 2-[(2R,5Z)-2-carboxy-4-methylthiazol-5(2H)-ylidene]ethyl phosphate + 4-amino-2-methyl-5-(diphosphooxymethyl)pyrimidine + 2 H(+) = thiamine phosphate + CO2 + diphosphate. It catalyses the reaction 2-(2-carboxy-4-methylthiazol-5-yl)ethyl phosphate + 4-amino-2-methyl-5-(diphosphooxymethyl)pyrimidine + 2 H(+) = thiamine phosphate + CO2 + diphosphate. The catalysed reaction is 4-methyl-5-(2-phosphooxyethyl)-thiazole + 4-amino-2-methyl-5-(diphosphooxymethyl)pyrimidine + H(+) = thiamine phosphate + diphosphate. It participates in cofactor biosynthesis; thiamine diphosphate biosynthesis; thiamine phosphate from 4-amino-2-methyl-5-diphosphomethylpyrimidine and 4-methyl-5-(2-phosphoethyl)-thiazole: step 1/1. Functionally, condenses 4-methyl-5-(beta-hydroxyethyl)thiazole monophosphate (THZ-P) and 2-methyl-4-amino-5-hydroxymethyl pyrimidine pyrophosphate (HMP-PP) to form thiamine monophosphate (TMP). This Archaeoglobus fulgidus (strain ATCC 49558 / DSM 4304 / JCM 9628 / NBRC 100126 / VC-16) protein is Thiamine-phosphate synthase.